Consider the following 149-residue polypeptide: Calmodulin (149 aa).

Residue A2 is modified to N-acetylalanine. EF-hand domains are found at residues 8–43 (EQIA…LGQN), 44–79 (PTEA…KMKE), 81–116 (DSEE…LGEK), and 117–149 (LTDE…MTSK). Positions 21, 23, 25, 27, 32, 57, 59, 61, 63, 68, 94, 96, 98, and 105 each coordinate Ca(2+). Position 116 is an N6,N6,N6-trimethyllysine (K116). Ca(2+) contacts are provided by D130, D132, D134, Q136, and E141.

The protein belongs to the calmodulin family.

Its function is as follows. Calmodulin mediates the control of a large number of enzymes, ion channels and other proteins by Ca(2+). Among the enzymes to be stimulated by the calmodulin-Ca(2+) complex are a number of protein kinases and phosphatases. The sequence is that of Calmodulin from Suberites domuncula (Sponge).